The chain runs to 90 residues: UPF0223 protein lmo1058 (90 aa).

The protein belongs to the UPF0223 family.

The chain is UPF0223 protein lmo1058 from Listeria monocytogenes serovar 1/2a (strain ATCC BAA-679 / EGD-e).